We begin with the raw amino-acid sequence, 110 residues long: UPF0060 membrane protein BTH_I2792 (110 aa).

4 helical membrane-spanning segments follow: residues 9–29 (ALFV…WLVL), 34–54 (PVWL…LLTL), 64–84 (AAYG…VDGV), and 86–106 (LSRW…VIAL).

The protein belongs to the UPF0060 family.

Its subcellular location is the cell inner membrane. The protein is UPF0060 membrane protein BTH_I2792 of Burkholderia thailandensis (strain ATCC 700388 / DSM 13276 / CCUG 48851 / CIP 106301 / E264).